The sequence spans 429 residues: 3-phosphoshikimate 1-carboxyvinyltransferase (429 aa).

Residues lysine 20, serine 21, and arginine 25 each contribute to the 3-phosphoshikimate site. Residue lysine 20 coordinates phosphoenolpyruvate. Phosphoenolpyruvate-binding residues include glycine 89 and arginine 118. Positions 164, 165, 166, 192, 311, and 338 each coordinate 3-phosphoshikimate. Residue glutamine 166 coordinates phosphoenolpyruvate. Aspartate 311 functions as the Proton acceptor in the catalytic mechanism. Phosphoenolpyruvate-binding residues include arginine 342 and arginine 384.

Belongs to the EPSP synthase family. Monomer.

It is found in the cytoplasm. The catalysed reaction is 3-phosphoshikimate + phosphoenolpyruvate = 5-O-(1-carboxyvinyl)-3-phosphoshikimate + phosphate. It functions in the pathway metabolic intermediate biosynthesis; chorismate biosynthesis. In terms of biological role, catalyzes the transfer of the enolpyruvyl moiety of phosphoenolpyruvate (PEP) to the 5-hydroxyl of shikimate-3-phosphate (S3P) to produce enolpyruvyl shikimate-3-phosphate and inorganic phosphate. This chain is 3-phosphoshikimate 1-carboxyvinyltransferase, found in Methanococcus maripaludis (strain C6 / ATCC BAA-1332).